The primary structure comprises 154 residues: Ribonuclease H (154 aa).

In terms of domain architecture, RNase H type-1 spans 1–142 (MLKHIDLYTD…CDELARDAAS (142 aa)). Residues D10, E48, D70, and D134 each coordinate Mg(2+). The segment covering 126–147 (GHPENERCDELARDAASGKELA) has biased composition (basic and acidic residues). The tract at residues 126-154 (GHPENERCDELARDAASGKELAEDTGYQP) is disordered.

This sequence belongs to the RNase H family. In terms of assembly, monomer. Mg(2+) serves as cofactor.

Its subcellular location is the cytoplasm. The enzyme catalyses Endonucleolytic cleavage to 5'-phosphomonoester.. Functionally, endonuclease that specifically degrades the RNA of RNA-DNA hybrids. The polypeptide is Ribonuclease H (Aeromonas salmonicida (strain A449)).